The sequence spans 369 residues: Phospho-N-acetylmuramoyl-pentapeptide-transferase (369 aa).

10 helical membrane passes run 2–22 (IALL…TPLF), 55–75 (TVVV…MWMM), 86–106 (GLLL…DDFI), 120–140 (AKLI…LQFP), 163–183 (LAFG…NLII), 196–216 (LDGL…IMGI), 239–259 (PMDL…FLWW), 266–286 (IFMG…FAIL), 291–311 (LLLA…IIQV), and 348–368 (ILAG…WVVL).

Belongs to the glycosyltransferase 4 family. MraY subfamily. Mg(2+) is required as a cofactor.

Its subcellular location is the cell membrane. The catalysed reaction is UDP-N-acetyl-alpha-D-muramoyl-L-alanyl-gamma-D-glutamyl-meso-2,6-diaminopimeloyl-D-alanyl-D-alanine + di-trans,octa-cis-undecaprenyl phosphate = di-trans,octa-cis-undecaprenyl diphospho-N-acetyl-alpha-D-muramoyl-L-alanyl-D-glutamyl-meso-2,6-diaminopimeloyl-D-alanyl-D-alanine + UMP. It functions in the pathway cell wall biogenesis; peptidoglycan biosynthesis. Functionally, catalyzes the initial step of the lipid cycle reactions in the biosynthesis of the cell wall peptidoglycan: transfers peptidoglycan precursor phospho-MurNAc-pentapeptide from UDP-MurNAc-pentapeptide onto the lipid carrier undecaprenyl phosphate, yielding undecaprenyl-pyrophosphoryl-MurNAc-pentapeptide, known as lipid I. This chain is Phospho-N-acetylmuramoyl-pentapeptide-transferase, found in Paenarthrobacter aurescens (strain TC1).